The chain runs to 352 residues: Transcription factor BHLH156 (352 aa).

The interval 59-141 is disordered; the sequence is GGDDDDNGGV…RSKTIVSERK (83 aa). The tract at residues 130 to 143 is basic motif; sequence RDRSKTIVSERKRR. The bHLH domain occupies 130-179; that stretch reads RDRSKTIVSERKRRVRMKEKLYELRALVPNITKMDKASIIADAVVYVKDL. Residues 144–179 form a helix-loop-helix motif region; it reads VRMKEKLYELRALVPNITKMDKASIIADAVVYVKDL. Positions 194-216 are disordered; the sequence is EEARPIRPPPPSAAAQRPQRQPR. Positions 206-216 are enriched in low complexity; the sequence is AAAQRPQRQPR.

The protein belongs to the bHLH protein family. As to quaternary structure, forms homodimers. Interacts with IRO2 in the nucleus. In terms of tissue distribution, expressed in the meristematic zone of lateral and primary roots.

It localises to the nucleus. In terms of biological role, transcription factor involved in positive regulation of genes involved in strategy II iron acquisition, including genes for mugineic acid (MA) family phytosiderophores biosynthesis, and genes involved in S-adenosylmethionine cycle and iron transport. May play a role in the regulation of iron deficiency response by promoting the nuclear localization of IRO2. Possesses transactivation activity in yeast. The polypeptide is Transcription factor BHLH156 (Oryza sativa subsp. japonica (Rice)).